Consider the following 364-residue polypeptide: DNA replication and repair protein RecF (364 aa).

30–37 (GNNAQGKT) is a binding site for ATP.

Belongs to the RecF family.

Its subcellular location is the cytoplasm. Its function is as follows. The RecF protein is involved in DNA metabolism; it is required for DNA replication and normal SOS inducibility. RecF binds preferentially to single-stranded, linear DNA. It also seems to bind ATP. The chain is DNA replication and repair protein RecF from Clostridium botulinum (strain Loch Maree / Type A3).